We begin with the raw amino-acid sequence, 447 residues long: UDP-N-acetylmuramoyl-L-alanyl-D-glutamate--2,6-diaminopimelate ligase (447 aa).

Thr21 contacts UDP-N-acetyl-alpha-D-muramoyl-L-alanyl-D-glutamate. 74–80 (GTNGKTT) is an ATP binding site. UDP-N-acetyl-alpha-D-muramoyl-L-alanyl-D-glutamate-binding positions include 117–118 (TT), Ser144, Gln150, and Arg152. Position 184 is an N6-carboxylysine (Lys184). Residues Arg340, 364–367 (DNPR), Gly415, and Glu419 contribute to the meso-2,6-diaminopimelate site. The short motif at 364-367 (DNPR) is the Meso-diaminopimelate recognition motif element.

Belongs to the MurCDEF family. MurE subfamily. The cofactor is Mg(2+). Post-translationally, carboxylation is probably crucial for Mg(2+) binding and, consequently, for the gamma-phosphate positioning of ATP.

Its subcellular location is the cytoplasm. It carries out the reaction UDP-N-acetyl-alpha-D-muramoyl-L-alanyl-D-glutamate + meso-2,6-diaminopimelate + ATP = UDP-N-acetyl-alpha-D-muramoyl-L-alanyl-gamma-D-glutamyl-meso-2,6-diaminopimelate + ADP + phosphate + H(+). The protein operates within cell wall biogenesis; peptidoglycan biosynthesis. Its function is as follows. Catalyzes the addition of meso-diaminopimelic acid to the nucleotide precursor UDP-N-acetylmuramoyl-L-alanyl-D-glutamate (UMAG) in the biosynthesis of bacterial cell-wall peptidoglycan. The sequence is that of UDP-N-acetylmuramoyl-L-alanyl-D-glutamate--2,6-diaminopimelate ligase from Helicobacter pylori (strain J99 / ATCC 700824) (Campylobacter pylori J99).